The sequence spans 437 residues: Serine hydroxymethyltransferase 2 (437 aa).

(6S)-5,6,7,8-tetrahydrofolate-binding positions include L125 and 129–131 (GHL). Residue K234 is modified to N6-(pyridoxal phosphate)lysine.

It belongs to the SHMT family. As to quaternary structure, homodimer. The cofactor is pyridoxal 5'-phosphate.

Its subcellular location is the cytoplasm. It carries out the reaction (6R)-5,10-methylene-5,6,7,8-tetrahydrofolate + glycine + H2O = (6S)-5,6,7,8-tetrahydrofolate + L-serine. It participates in one-carbon metabolism; tetrahydrofolate interconversion. It functions in the pathway amino-acid biosynthesis; glycine biosynthesis; glycine from L-serine: step 1/1. Its function is as follows. Catalyzes the reversible interconversion of serine and glycine with tetrahydrofolate (THF) serving as the one-carbon carrier. This reaction serves as the major source of one-carbon groups required for the biosynthesis of purines, thymidylate, methionine, and other important biomolecules. Also exhibits THF-independent aldolase activity toward beta-hydroxyamino acids, producing glycine and aldehydes, via a retro-aldol mechanism. The chain is Serine hydroxymethyltransferase 2 from Mesorhizobium japonicum (strain LMG 29417 / CECT 9101 / MAFF 303099) (Mesorhizobium loti (strain MAFF 303099)).